Consider the following 122-residue polypeptide: uncharacterized protein (122 aa).

Transmembrane regions (helical) follow at residues 34–54 (IIFLTVGLLLFIAALALGVLV) and 91–111 (FVLAAFGFVCMVASFLYFVSF).

The protein resides in the cell membrane. This is an uncharacterized protein from Mycoplasma pneumoniae (strain ATCC 29342 / M129 / Subtype 1) (Mycoplasmoides pneumoniae).